The following is a 167-amino-acid chain: Glutathione peroxidase-like peroxiredoxin 1 (167 aa).

Cysteine 36 acts as the Cysteine sulfenic acid (-SOH) intermediate in catalysis. A disulfide bond links cysteine 36 and cysteine 82.

It belongs to the glutathione peroxidase family. As to quaternary structure, monomer.

It is found in the peroxisome matrix. Its subcellular location is the mitochondrion outer membrane. It catalyses the reaction 2 glutathione + H2O2 = glutathione disulfide + 2 H2O. It carries out the reaction a hydroperoxide + [thioredoxin]-dithiol = an alcohol + [thioredoxin]-disulfide + H2O. Its function is as follows. Glutathione peroxidase-like protein that protects cells from phospholipid hydroperoxides and nonphospholipid peroxides during oxidative stress. Has peroxidase activity using thioredoxin or glutathione as a reducing power. Involved in peroxisome formation. This is Glutathione peroxidase-like peroxiredoxin 1 from Saccharomyces cerevisiae (strain ATCC 204508 / S288c) (Baker's yeast).